The chain runs to 314 residues: ATP synthase gamma chain (314 aa).

This sequence belongs to the ATPase gamma chain family. As to quaternary structure, F-type ATPases have 2 components, CF(1) - the catalytic core - and CF(0) - the membrane proton channel. CF(1) has five subunits: alpha(3), beta(3), gamma(1), delta(1), epsilon(1). CF(0) has three main subunits: a, b and c.

The protein resides in the cellular thylakoid membrane. Functionally, produces ATP from ADP in the presence of a proton gradient across the membrane. The gamma chain is believed to be important in regulating ATPase activity and the flow of protons through the CF(0) complex. The chain is ATP synthase gamma chain from Synechococcus sp. (strain JA-3-3Ab) (Cyanobacteria bacterium Yellowstone A-Prime).